Reading from the N-terminus, the 473-residue chain is Cysteine--tRNA ligase (473 aa).

Cys28 serves as a coordination point for Zn(2+). The short motif at 30–40 is the 'HIGH' region element; it reads MTVYDFCHIGH. Residues Cys212, His237, and Glu241 each contribute to the Zn(2+) site. The 'KMSKS' region signature appears at 277 to 281; that stretch reads KMSKS. Lys280 contributes to the ATP binding site.

It belongs to the class-I aminoacyl-tRNA synthetase family. As to quaternary structure, monomer. It depends on Zn(2+) as a cofactor.

It is found in the cytoplasm. It catalyses the reaction tRNA(Cys) + L-cysteine + ATP = L-cysteinyl-tRNA(Cys) + AMP + diphosphate. This chain is Cysteine--tRNA ligase, found in Polynucleobacter necessarius subsp. necessarius (strain STIR1).